The chain runs to 243 residues: Geranylgeranylglyceryl phosphate synthase (243 aa).

Mg(2+)-binding residues include Asp22 and Ser51. Sn-glycerol 1-phosphate-binding positions include 169–175 (YLEAGSG), 200–201 (GG), and 222–223 (GT).

This sequence belongs to the GGGP/HepGP synthase family. Group II subfamily. Mg(2+) is required as a cofactor.

The protein resides in the cytoplasm. It carries out the reaction sn-glycerol 1-phosphate + (2E,6E,10E)-geranylgeranyl diphosphate = sn-3-O-(geranylgeranyl)glycerol 1-phosphate + diphosphate. The protein operates within membrane lipid metabolism; glycerophospholipid metabolism. Its function is as follows. Prenyltransferase that catalyzes the transfer of the geranylgeranyl moiety of geranylgeranyl diphosphate (GGPP) to the C3 hydroxyl of sn-glycerol-1-phosphate (G1P). This reaction is the first ether-bond-formation step in the biosynthesis of archaeal membrane lipids. This chain is Geranylgeranylglyceryl phosphate synthase, found in Methanosphaera stadtmanae (strain ATCC 43021 / DSM 3091 / JCM 11832 / MCB-3).